Here is a 96-residue protein sequence, read N- to C-terminus: Large ribosomal subunit protein uL23 (96 aa).

It belongs to the universal ribosomal protein uL23 family. Part of the 50S ribosomal subunit. Contacts protein L29, and trigger factor when it is bound to the ribosome.

Functionally, one of the early assembly proteins it binds 23S rRNA. One of the proteins that surrounds the polypeptide exit tunnel on the outside of the ribosome. Forms the main docking site for trigger factor binding to the ribosome. In Enterococcus faecalis (strain ATCC 700802 / V583), this protein is Large ribosomal subunit protein uL23.